A 309-amino-acid chain; its full sequence is Manganese-dependent inorganic pyrophosphatase (309 aa).

H9, D13, D15, D75, H97, and D149 together coordinate Mn(2+).

In terms of assembly, homodimer. Requires Mn(2+) as cofactor.

The protein localises to the cytoplasm. It catalyses the reaction diphosphate + H2O = 2 phosphate + H(+). This Bacillus subtilis (strain 168) protein is Manganese-dependent inorganic pyrophosphatase (ppaC).